Consider the following 373-residue polypeptide: Beta sliding clamp homolog GriR (373 aa).

Belongs to the beta sliding clamp family. In terms of assembly, forms a ring-shaped head-to-tail homodimer around DNA which binds and tethers DNA polymerases and other proteins to the DNA. The DNA replisome complex has a single clamp-loading complex (3 tau and 1 each of delta, delta', psi and chi subunits) which binds 3 Pol III cores (1 core on the leading strand and 2 on the lagging strand) each with a beta sliding clamp dimer. Additional proteins in the replisome are other copies of gamma, psi and chi, Ssb, DNA helicase and RNA primase.

Its subcellular location is the cytoplasm. In terms of biological role, a homolog of the beta sliding clamp protein encoded within the biosynthetic cluster for griselimycin synthesis. Upon expression in S.coelicolor A3(2), which is susceptible to this antibiotic, confers resistance to griselimycin. The beta sliding clamp confers DNA tethering and processivity to DNA polymerases and other proteins. Acts as a clamp, forming a ring around DNA (a reaction catalyzed by the clamp-loading complex) which diffuses in an ATP-independent manner freely and bidirectionally along dsDNA. Initially characterized for its ability to contact the catalytic subunit of DNA polymerase III (Pol III), a complex, multichain enzyme responsible for most of the replicative synthesis in bacteria; Pol III exhibits 3'-5' exonuclease proofreading activity. The beta chain is required for initiation of replication as well as for processivity of DNA replication. The polypeptide is Beta sliding clamp homolog GriR (Streptomyces muensis).